Reading from the N-terminus, the 195-residue chain is Adenylate kinase (195 aa).

ATP is bound at residue 8-16 (GIPGVGKTT).

Belongs to the archaeal adenylate kinase family.

It is found in the cytoplasm. It carries out the reaction AMP + ATP = 2 ADP. This chain is Adenylate kinase, found in Saccharolobus islandicus (strain M.14.25 / Kamchatka #1) (Sulfolobus islandicus).